The chain runs to 132 residues: Fatty acid-binding protein 2 (132 aa).

Residue serine 2 is modified to N-acetylserine. Residues glutamine 40 and 128–130 (RYY) contribute to the hexadecanoate site.

This sequence belongs to the calycin superfamily. Fatty-acid binding protein (FABP) family. As to quaternary structure, monomer. Midgut.

It is found in the cytoplasm. Functionally, binds fatty acids in a 1:1 molar ratio. The sequence is that of Fatty acid-binding protein 2 (MFB2) from Manduca sexta (Tobacco hawkmoth).